Here is a 131-residue protein sequence, read N- to C-terminus: Fluoride-specific ion channel FluC 1 (131 aa).

The next 4 membrane-spanning stretches (helical) occupy residues leucine 4–leucine 24, histidine 40–leucine 60, leucine 73–valine 93, and leucine 108–leucine 128. Na(+) contacts are provided by glycine 83 and serine 86.

This sequence belongs to the fluoride channel Fluc/FEX (TC 1.A.43) family.

The protein localises to the cell inner membrane. The catalysed reaction is fluoride(in) = fluoride(out). Na(+) is not transported, but it plays an essential structural role and its presence is essential for fluoride channel function. Its function is as follows. Fluoride-specific ion channel. Important for reducing fluoride concentration in the cell, thus reducing its toxicity. The protein is Fluoride-specific ion channel FluC 1 of Prochlorococcus marinus (strain MIT 9313).